A 155-amino-acid chain; its full sequence is Interleukin-2 (155 aa).

The first 20 residues, 1 to 20 (MYRMQLLSCIALTLALVANG), serve as a signal peptide directing secretion. Thr23 carries an O-linked (GalNAc...) threonine glycan. A disulfide bridge links Cys79 with Cys127.

This sequence belongs to the IL-2 family.

Its subcellular location is the secreted. Cytokine produced by activated CD4-positive helper T-cells and to a lesser extend activated CD8-positive T-cells and natural killer (NK) cells that plays pivotal roles in the immune response and tolerance. Binds to a receptor complex composed of either the high-affinity trimeric IL-2R (IL2RA/CD25, IL2RB/CD122 and IL2RG/CD132) or the low-affinity dimeric IL-2R (IL2RB and IL2RG). Interaction with the receptor leads to oligomerization and conformation changes in the IL-2R subunits resulting in downstream signaling starting with phosphorylation of JAK1 and JAK3. In turn, JAK1 and JAK3 phosphorylate the receptor to form a docking site leading to the phosphorylation of several substrates including STAT5. This process leads to activation of several pathways including STAT, phosphoinositide-3-kinase/PI3K and mitogen-activated protein kinase/MAPK pathways. Functions as a T-cell growth factor and can increase NK-cell cytolytic activity as well. Promotes strong proliferation of activated B-cells and subsequently immunoglobulin production. Plays a pivotal role in regulating the adaptive immune system by controlling the survival and proliferation of regulatory T-cells, which are required for the maintenance of immune tolerance. Moreover, participates in the differentiation and homeostasis of effector T-cell subsets, including Th1, Th2, Th17 as well as memory CD8-positive T-cells. The polypeptide is Interleukin-2 (IL2) (Capra hircus (Goat)).